The primary structure comprises 349 residues: UDP-N-acetylenolpyruvoylglucosamine reductase (349 aa).

In terms of domain architecture, FAD-binding PCMH-type spans 25–213; sequence VGPVARRLVT…VEQGERTDPQ (189 aa). Arg-165 is an active-site residue. Catalysis depends on Ser-242, which acts as the Proton donor. Glu-341 is a catalytic residue.

Belongs to the MurB family. The cofactor is FAD.

The protein localises to the cytoplasm. The catalysed reaction is UDP-N-acetyl-alpha-D-muramate + NADP(+) = UDP-N-acetyl-3-O-(1-carboxyvinyl)-alpha-D-glucosamine + NADPH + H(+). It functions in the pathway cell wall biogenesis; peptidoglycan biosynthesis. In terms of biological role, cell wall formation. The sequence is that of UDP-N-acetylenolpyruvoylglucosamine reductase from Mycolicibacterium gilvum (strain PYR-GCK) (Mycobacterium gilvum (strain PYR-GCK)).